The sequence spans 162 residues: Nucleotide-binding protein ABSDF0503 (162 aa).

This sequence belongs to the YajQ family.

In terms of biological role, nucleotide-binding protein. The polypeptide is Nucleotide-binding protein ABSDF0503 (Acinetobacter baumannii (strain SDF)).